The primary structure comprises 115 residues: NADH-ubiquinone oxidoreductase chain 3 (115 aa).

Transmembrane regions (helical) follow at residues 4–24 (ALTL…AFWL), 55–75 (FFLV…LLPL), and 84–104 (LTTM…SLAY).

The protein belongs to the complex I subunit 3 family. In terms of assembly, core subunit of respiratory chain NADH dehydrogenase (Complex I) which is composed of 45 different subunits. Interacts with TMEM186. Interacts with TMEM242.

It is found in the mitochondrion inner membrane. The catalysed reaction is a ubiquinone + NADH + 5 H(+)(in) = a ubiquinol + NAD(+) + 4 H(+)(out). Its function is as follows. Core subunit of the mitochondrial membrane respiratory chain NADH dehydrogenase (Complex I) which catalyzes electron transfer from NADH through the respiratory chain, using ubiquinone as an electron acceptor. Essential for the catalytic activity of complex I. In Phoca vitulina (Harbor seal), this protein is NADH-ubiquinone oxidoreductase chain 3.